Consider the following 550-residue polypeptide: Methionine--tRNA ligase (550 aa).

The 'HIGH' region signature appears at 13-23 (PYANGPLHFGH). 4 residues coordinate Zn(2+): Cys145, Cys148, Cys158, and Cys161. The short motif at 331 to 335 (QFSKS) is the 'KMSKS' region element. Lys334 contributes to the ATP binding site.

Belongs to the class-I aminoacyl-tRNA synthetase family. MetG type 1 subfamily. In terms of assembly, monomer. Requires Zn(2+) as cofactor.

The protein localises to the cytoplasm. It catalyses the reaction tRNA(Met) + L-methionine + ATP = L-methionyl-tRNA(Met) + AMP + diphosphate. In terms of biological role, is required not only for elongation of protein synthesis but also for the initiation of all mRNA translation through initiator tRNA(fMet) aminoacylation. This chain is Methionine--tRNA ligase, found in Chlamydia trachomatis serovar L2b (strain UCH-1/proctitis).